Reading from the N-terminus, the 238-residue chain is Large ribosomal subunit protein uL3 (238 aa).

Belongs to the universal ribosomal protein uL3 family. In terms of assembly, part of the 50S ribosomal subunit. Forms a cluster with proteins L14 and L19.

In terms of biological role, one of the primary rRNA binding proteins, it binds directly near the 3'-end of the 23S rRNA, where it nucleates assembly of the 50S subunit. This chain is Large ribosomal subunit protein uL3, found in Mesoplasma florum (strain ATCC 33453 / NBRC 100688 / NCTC 11704 / L1) (Acholeplasma florum).